A 142-amino-acid chain; its full sequence is Hemoglobin subunit epsilon (142 aa).

Positions 3-142 constitute a Globin domain; it reads HFTAEEKAAI…KLVSAVAIAL (140 aa). Phosphoserine occurs at positions 14 and 51. Heme b is bound by residues His64 and His93.

It belongs to the globin family. As to quaternary structure, heterotetramer of two alpha chains and two epsilon chains in early embryonic hemoglobin Gower-2; two zeta chains and two epsilon chains in early embryonic hemoglobin Gower-1. Red blood cells.

In terms of biological role, the epsilon chain is a beta-type chain of early mammalian embryonic hemoglobin. This Callithrix geoffroyi (Geoffroy's marmoset) protein is Hemoglobin subunit epsilon (HBE1).